A 428-amino-acid polypeptide reads, in one-letter code: 4-hydroxy-3-methylbut-2-en-1-yl diphosphate synthase (flavodoxin) (428 aa).

Positions 315, 318, 361, and 368 each coordinate [4Fe-4S] cluster.

Belongs to the IspG family. It depends on [4Fe-4S] cluster as a cofactor.

It carries out the reaction (2E)-4-hydroxy-3-methylbut-2-enyl diphosphate + oxidized [flavodoxin] + H2O + 2 H(+) = 2-C-methyl-D-erythritol 2,4-cyclic diphosphate + reduced [flavodoxin]. It participates in isoprenoid biosynthesis; isopentenyl diphosphate biosynthesis via DXP pathway; isopentenyl diphosphate from 1-deoxy-D-xylulose 5-phosphate: step 5/6. Converts 2C-methyl-D-erythritol 2,4-cyclodiphosphate (ME-2,4cPP) into 1-hydroxy-2-methyl-2-(E)-butenyl 4-diphosphate. The chain is 4-hydroxy-3-methylbut-2-en-1-yl diphosphate synthase (flavodoxin) from Ralstonia pickettii (strain 12J).